Here is a 365-residue protein sequence, read N- to C-terminus: D-alanine--D-alanine ligase (365 aa).

Residues 156-360 (KKLMAAEGLP…YAQLLDNLIE (205 aa)) enclose the ATP-grasp domain. Residue 183-238 (KRELGLPVFVKPARGGSSIGISRVADWSEWDAALSLAREHDSKVIVEAEIVGVEVE) coordinates ATP. Mg(2+) contacts are provided by D315, E327, and N329.

Belongs to the D-alanine--D-alanine ligase family. It depends on Mg(2+) as a cofactor. Mn(2+) is required as a cofactor.

It is found in the cytoplasm. It catalyses the reaction 2 D-alanine + ATP = D-alanyl-D-alanine + ADP + phosphate + H(+). Its pathway is cell wall biogenesis; peptidoglycan biosynthesis. Cell wall formation. The sequence is that of D-alanine--D-alanine ligase from Corynebacterium diphtheriae (strain ATCC 700971 / NCTC 13129 / Biotype gravis).